Here is a 102-residue protein sequence, read N- to C-terminus: Ferredoxin-thioredoxin reductase, catalytic chain (102 aa).

A [4Fe-4S] cluster-binding site is contributed by Cys53. Cys55 (nucleophile) is an active-site residue. An intrachain disulfide couples Cys55 to Cys85. Positions 72, 74, and 83 each coordinate [4Fe-4S] cluster.

The protein belongs to the ferredoxin thioredoxin reductase beta subunit family. In terms of assembly, heterodimer of subunit A (variable subunit) and subunit B (catalytic subunit). Heterodimeric FTR forms a complex with ferredoxin and thioredoxin. It depends on [4Fe-4S] cluster as a cofactor.

The protein resides in the plastid. It localises to the chloroplast. The catalysed reaction is [thioredoxin]-disulfide + 2 reduced [2Fe-2S]-[ferredoxin] + 2 H(+) = [thioredoxin]-dithiol + 2 oxidized [2Fe-2S]-[ferredoxin]. Catalytic subunit of the ferredoxin-thioredoxin reductase (FTR), which catalyzes the two-electron reduction of thioredoxins by the electrons provided by reduced ferredoxin. The sequence is that of Ferredoxin-thioredoxin reductase, catalytic chain (ftrB) from Guillardia theta (Cryptophyte).